Consider the following 199-residue polypeptide: Early activation antigen CD69 (199 aa).

The disordered stretch occupies residues 1 to 29 (MSSENCFVAENSSLHPESGQENDATSPHF). At 1-40 (MSSENCFVAENSSLHPESGQENDATSPHFSTRHEGSFQVP) the chain is on the cytoplasmic side. The helical; Signal-anchor for type II membrane protein transmembrane segment at 41–61 (VLCAVMNVVFITILIIALIAL) threads the bilayer. The Extracellular portion of the chain corresponds to 62-199 (SVGQYNCPGQ…LYWICNKPYK (138 aa)). Intrachain disulfides connect Cys85–Cys96, Cys113–Cys194, and Cys173–Cys186. One can recognise a C-type lectin domain in the interval 92-195 (YQRKCYFIST…CEKNLYWICN (104 aa)). The N-linked (GlcNAc...) asparagine glycan is linked to Asn166.

Homodimer; disulfide-linked. Interacts with S100A8 and S100A9. Interacts with galactin-1/LGALS1. Interacts with S1PR1; this interaction mediates S1PR1 degradation. Constitutive Ser/Thr phosphorylation in both mature thymocytes and activated T-lymphocytes. Expressed on the surface of activated T-cells, B-cells, natural killer cells, neutrophils, eosinophils, epidermal Langerhans cells and platelets.

The protein localises to the cell membrane. Transmembrane protein expressed mainly on T-cells resident in mucosa that plays an essential role in immune cell homeostasis. Rapidly expressed on the surface of platelets, T-lymphocytes and NK cells upon activation by various stimuli, such as antigen recognition or cytokine signaling, stimulates different signaling pathways in different cell types. Negatively regulates Th17 cell differentiation through its carbohydrate dependent interaction with galectin-1/LGALS1 present on immature dendritic cells. Association of CD69 cytoplasmic tail with the JAK3/STAT5 signaling pathway regulates the transcription of RORgamma/RORC and, consequently, differentiation toward the Th17 lineage. Also acts via the S100A8/S100A9 complex present on peripheral blood mononuclear cells to promote the conversion of naive CD4 T-cells into regulatory T-cells. Acts as an oxidized low-density lipoprotein (oxLDL) receptor in CD4 T-lymphocytes and negatively regulates the inflammatory response by inducing the expression of PDCD1 through the activation of NFAT. Participates in adipose tissue-derived mesenchymal stem cells (ASCs)-mediated protection against P.aeruginosa infection. Mechanistically, specifically recognizes P.aeruginosa to promote ERK1 activation, followed by granulocyte-macrophage colony-stimulating factor (GM-CSF) and other inflammatory cytokines secretion. In eosinophils, induces IL-10 production through the ERK1/2 pathway. Negatively regulates the chemotactic responses of effector lymphocytes and dendritic cells (DCs) to sphingosine 1 phosphate/S1P by acting as a S1PR1 receptor agonist and facilitating the internalization and degradation of the receptor. The protein is Early activation antigen CD69 (CD69) of Homo sapiens (Human).